We begin with the raw amino-acid sequence, 372 residues long: MELVPSARAELQSSPLVNLSDAFPSAFPSAGANASGSPGARSASSLALAIAITALYSAVCAVGLLGNVLVMFGIVRYTKLKTATNIYIFNLALADALATSTLPFQSAKYLMETWPFGELLCKAVLSIDYYNMFTSIFTLTMMSVDRYIAVCHPVKALDFRTPAKAKLINICIWVLASGVGVPIMVMAVTQPRDGAVVCMLQFPSPSWYWDTVTKICVFLFAFVVPILIITVCYGLMLLRLRSVRLLSGSKEKDRSLRRITRMVLVVVGAFVVCWAPIHIFVIVWTLVDINRRDPLVVAALHLCIALGYANSSLNPVLYAFLDENFKRCFRQLCRTPCGRQEPGSLRRPRQATTRERVTACTPSDGPGGGAAA.

Topologically, residues 1-47 (MELVPSARAELQSSPLVNLSDAFPSAFPSAGANASGSPGARSASSLA) are extracellular. 2 N-linked (GlcNAc...) asparagine glycosylation sites follow: asparagine 18 and asparagine 33. Residues 48-75 (LAIAITALYSAVCAVGLLGNVLVMFGIV) traverse the membrane as a helical segment. Topologically, residues 76 to 85 (RYTKLKTATN) are cytoplasmic. A helical transmembrane segment spans residues 86–110 (IYIFNLALADALATSTLPFQSAKYL). The Extracellular segment spans residues 111–122 (METWPFGELLCK). An intrachain disulfide couples cysteine 121 to cysteine 198. A helical transmembrane segment spans residues 123–144 (AVLSIDYYNMFTSIFTLTMMSV). At 145–163 (DRYIAVCHPVKALDFRTPA) the chain is on the cytoplasmic side. Residues 164–186 (KAKLINICIWVLASGVGVPIMVM) form a helical membrane-spanning segment. Topologically, residues 187 to 206 (AVTQPRDGAVVCMLQFPSPS) are extracellular. A helical transmembrane segment spans residues 207–238 (WYWDTVTKICVFLFAFVVPILIITVCYGLMLL). The Cytoplasmic portion of the chain corresponds to 239–261 (RLRSVRLLSGSKEKDRSLRRITR). A helical transmembrane segment spans residues 262 to 284 (MVLVVVGAFVVCWAPIHIFVIVW). Residues 285–299 (TLVDINRRDPLVVAA) lie on the Extracellular side of the membrane. Residues 300–321 (LHLCIALGYANSSLNPVLYAFL) traverse the membrane as a helical segment. Over 322 to 372 (DENFKRCFRQLCRTPCGRQEPGSLRRPRQATTRERVTACTPSDGPGGGAAA) the chain is Cytoplasmic. Cysteine 333 is lipidated: S-palmitoyl cysteine. The segment at 340–372 (QEPGSLRRPRQATTRERVTACTPSDGPGGGAAA) is disordered.

The protein belongs to the G-protein coupled receptor 1 family. In terms of assembly, may form homooligomers. Forms a heterodimer with OPRM1. Interacts with GPRASP1. Interacts with RTP4; the interaction promotes cell surface localization of the OPRD1-OPRM1 heterodimer. Ubiquitinated. A basal ubiquitination seems not to be related to degradation. Ubiquitination is increased upon formation of OPRM1:OPRD1 oligomers leading to proteasomal degradation; the ubiquitination is diminished by RTP4. Brain, with high concentrations in the basal ganglia and limbic regions.

It is found in the cell membrane. Its function is as follows. G-protein coupled receptor that functions as a receptor for endogenous enkephalins and for a subset of other opioids. Ligand binding causes a conformation change that triggers signaling via guanine nucleotide-binding proteins (G proteins) and modulates the activity of down-stream effectors, such as adenylate cyclase. Signaling leads to the inhibition of adenylate cyclase activity. Inhibits neurotransmitter release by reducing calcium ion currents and increasing potassium ion conductance. Plays a role in the perception of pain and in opiate-mediated analgesia. Plays a role in developing analgesic tolerance to morphine. This Mus musculus (Mouse) protein is Delta-type opioid receptor (Oprd1).